We begin with the raw amino-acid sequence, 351 residues long: Nicotinate-nucleotide--dimethylbenzimidazole phosphoribosyltransferase (351 aa).

E315 functions as the Proton acceptor in the catalytic mechanism.

This sequence belongs to the CobT family.

The catalysed reaction is 5,6-dimethylbenzimidazole + nicotinate beta-D-ribonucleotide = alpha-ribazole 5'-phosphate + nicotinate + H(+). Its pathway is nucleoside biosynthesis; alpha-ribazole biosynthesis; alpha-ribazole from 5,6-dimethylbenzimidazole: step 1/2. In terms of biological role, catalyzes the synthesis of alpha-ribazole-5'-phosphate from nicotinate mononucleotide (NAMN) and 5,6-dimethylbenzimidazole (DMB). The protein is Nicotinate-nucleotide--dimethylbenzimidazole phosphoribosyltransferase of Acetivibrio thermocellus (strain ATCC 27405 / DSM 1237 / JCM 9322 / NBRC 103400 / NCIMB 10682 / NRRL B-4536 / VPI 7372) (Clostridium thermocellum).